The sequence spans 70 residues: Waprin-Thr1 (70 aa).

The N-terminal stretch at 1 to 19 is a signal peptide; that stretch reads MKARLLLLSVVILVGMVSA. Residues 20–70 form the WAP domain; the sequence is ENEKAGSCPDVNQPIPPLGLCRNMCESDSGCPNNEKCCKNGCGFMTCSRPR. Intrachain disulfides connect Cys27–Cys57, Cys40–Cys61, Cys44–Cys56, and Cys50–Cys66.

It belongs to the venom waprin family. Expressed by the venom gland.

Its subcellular location is the secreted. Its function is as follows. Damages membranes of susceptible bacteria. Has no hemolytic activity. Not toxic to mice. Does not inhibit the proteinases elastase and cathepsin G. The chain is Waprin-Thr1 from Thrasops jacksonii (Jackson's black tree snake).